The following is a 93-amino-acid chain: UPF0298 protein LMHCC_0506 (93 aa).

The protein belongs to the UPF0298 family.

The protein localises to the cytoplasm. The sequence is that of UPF0298 protein LMHCC_0506 from Listeria monocytogenes serotype 4a (strain HCC23).